The following is an 863-amino-acid chain: Leucine--tRNA ligase (863 aa).

The 'HIGH' region motif lies at 42 to 52; that stretch reads PYPSGKIHMGH. A 'KMSKS' region motif is present at residues 618–622; that stretch reads KMSKS. K621 is a binding site for ATP.

The protein belongs to the class-I aminoacyl-tRNA synthetase family.

Its subcellular location is the cytoplasm. The catalysed reaction is tRNA(Leu) + L-leucine + ATP = L-leucyl-tRNA(Leu) + AMP + diphosphate. The protein is Leucine--tRNA ligase of Desulfatibacillum aliphaticivorans.